Reading from the N-terminus, the 319-residue chain is N-acetyllactosaminide alpha-1,3-galactosyltransferase-like 1 (319 aa).

The Cytoplasmic segment spans residues 1–6 (MQYKKE). Residues 7–26 (ALLLMLFAVLLALTQRFSYS) traverse the membrane as a helical; Signal-anchor for type II membrane protein segment. Residues 27–319 (RTKDHLQKMY…IKHIKIAWKP (293 aa)) lie on the Lumenal side of the membrane. N-linked (GlcNAc...) asparagine glycans are attached at residues Asn-89 and Asn-101. Residues 97–102 (FATGNF), 188–190 (AVN), and 210–213 (HAWW) each bind substrate. Glu-278 (nucleophile) is an active-site residue.

The protein belongs to the glycosyltransferase 6 family. It depends on Mn(2+) as a cofactor.

The protein resides in the golgi apparatus. Its subcellular location is the golgi stack membrane. The enzyme catalyses a beta-D-galactosyl-(1-&gt;4)-N-acetyl-beta-D-glucosaminyl derivative + UDP-alpha-D-galactose = an alpha-D-galactosyl-(1-&gt;3)-beta-D-galactosyl-(1-&gt;4)-N-acetyl-beta-D-glucosaminyl derivative + UDP + H(+). The protein operates within protein modification; protein glycosylation. Synthesizes the galactose-alpha(1,3)-galactose group by catalyzing the transfer of a galactose residue, with an alpha-1,3 linkage, on terminal lactosaminide (Gal-beta-1,4-GlcNAc-R) disaccharide borne by a glycoprotein or a glycolipid. This Mus musculus (Mouse) protein is N-acetyllactosaminide alpha-1,3-galactosyltransferase-like 1 (Ggta1l1).